The chain runs to 66 residues: Surface composition regulator (66 aa).

This sequence belongs to the GlgS family.

In terms of biological role, major determinant of cell surface composition. Negatively regulates motility, adhesion and synthesis of biofilm exopolysaccharides. The protein is Surface composition regulator of Shigella flexneri.